A 96-amino-acid chain; its full sequence is UPF0125 protein YfjF (96 aa).

It belongs to the UPF0125 (RnfH) family.

This Escherichia coli O157:H7 protein is UPF0125 protein YfjF (yfjF).